The primary structure comprises 442 residues: tRNA-2-methylthio-N(6)-dimethylallyladenosine synthase (442 aa).

An MTTase N-terminal domain is found at 3–118; it reads KKVFIKTFGC…LPELLNARAA (116 aa). [4Fe-4S] cluster is bound by residues Cys12, Cys49, Cys81, Cys155, Cys159, and Cys162. The Radical SAM core domain occupies 141–374; sequence RVEGSSAFVS…QAVINNNIKD (234 aa). The TRAM domain occupies 377 to 440; the sequence is DERVGTVQRL…TFTLRGEVVV (64 aa).

The protein belongs to the methylthiotransferase family. MiaB subfamily. As to quaternary structure, monomer. Requires [4Fe-4S] cluster as cofactor.

The protein resides in the cytoplasm. It catalyses the reaction N(6)-dimethylallyladenosine(37) in tRNA + (sulfur carrier)-SH + AH2 + 2 S-adenosyl-L-methionine = 2-methylsulfanyl-N(6)-dimethylallyladenosine(37) in tRNA + (sulfur carrier)-H + 5'-deoxyadenosine + L-methionine + A + S-adenosyl-L-homocysteine + 2 H(+). Catalyzes the methylthiolation of N6-(dimethylallyl)adenosine (i(6)A), leading to the formation of 2-methylthio-N6-(dimethylallyl)adenosine (ms(2)i(6)A) at position 37 in tRNAs that read codons beginning with uridine. The protein is tRNA-2-methylthio-N(6)-dimethylallyladenosine synthase of Delftia acidovorans (strain DSM 14801 / SPH-1).